A 111-amino-acid chain; its full sequence is Beta-defensin 126 (111 aa).

Residues 1–20 (MKSLLFTLAVFMLLAQLVSG) form the signal peptide. Positions 21–63 (NWYVKKCLNDVGICKKKCKPEEMHVKNGWAMCGKQRDCCVPAD) are in vitro binds to LPS, mediates antimicrobial activity and inhibits LPS-mediated inflammation. 3 disulfides stabilise this stretch: C27/C58, C34/C52, and C38/C59.

It belongs to the beta-defensin family. As to quaternary structure, homodimer or homooligomer; disulfide-linked. In terms of processing, O-glycosylated; glycans contain alpha(2,3)-linked sialic acids.

The protein resides in the secreted. In terms of biological role, highly glycosylated atypical beta-defensin involved in several aspects of sperm function. Facilitates sperm transport in the female reproductive tract and contributes to sperm protection against immunodetection; both functions are probably implicating the negative surface charge provided by its O-linked oligosaccharides in the sperm glycocalyx. Involved in binding of sperm to oviductal epithelial cells to form a sperm reservoir until ovulation. Release from the sperm surface during capacitation and ovaluation by an elevation of oviductal fluid pH is unmasking other surface components and allows sperm to penetrate the cumulus matrix and bind to the zona pellucida of the oocyte. In vitro has antimicrobial activity and may inhibit LPS-mediated inflammation. The sequence is that of Beta-defensin 126 (DEFB126) from Gorilla gorilla gorilla (Western lowland gorilla).